Consider the following 509-residue polypeptide: Tyrosine-protein kinase Lck (509 aa).

Glycine 2 carries N-myristoyl glycine lipidation. The tract at residues glycine 2–tyrosine 72 is interactions with CD4 and CD8. S-palmitoyl cysteine attachment occurs at residues cysteine 3 and cysteine 5. One can recognise an SH3 domain in the interval leucine 61–serine 121. Lysine 99 is covalently cross-linked (Glycyl lysine isopeptide (Lys-Gly) (interchain with G-Cter in ubiquitin)). A Phosphoserine modification is found at serine 102. The SH2 domain maps to tryptophan 127–cysteine 224. The segment at arginine 154 to arginine 242 is interaction with PTPRH. Residue threonine 159 is modified to Phosphothreonine. At serine 162 the chain carries Phosphoserine. Position 192 is a phosphotyrosine (tyrosine 192). Serine 194 is modified (phosphoserine). One can recognise a Protein kinase domain in the interval leucine 245–phenylalanine 498. Residues leucine 251–valine 259 and lysine 273 contribute to the ATP site. Lysine 276 participates in a covalent cross-link: Glycyl lysine isopeptide (Lys-Gly) (interchain with G-Cter in ubiquitin). Aspartate 364 (proton acceptor) is an active-site residue. Tyrosine 394 is subject to Phosphotyrosine; by autocatalysis. Tyrosine 505 is modified (phosphotyrosine; by CSK).

This sequence belongs to the protein kinase superfamily. Tyr protein kinase family. SRC subfamily. Binds to the cytoplasmic domain of cell surface receptors, such as AXL, CD2, CD4, CD5, CD8, CD44, CD45 and CD122. Also binds to effector molecules, such as PI4K, VAV1, RASA1, FYB1 and to other protein kinases including CDK1, RAF1, ZAP70 and SYK. Binds to phosphatidylinositol 3'-kinase (PI3K) from T-lymphocytes through its SH3 domain and to the tyrosine phosphorylated form of KHDRBS1/p70 through its SH2 domain. This interaction inhibits its tyrosine-kinase activity. Interacts with SQSTM1. Interacts with phosphorylated LIME1. Interacts with CBLB and PTPRH. Interacts with RUNX3. Forms a signaling complex with EPHA1, PTK2B and PI3-KINASE; upon activation by EFNA1 which may regulate T-lymphocyte migration. Associates with ZAP70 and RHOH; these interactions allow LCK-mediated RHOH and CD3 subunit phosphorylation in the presence of functional ZAP70. Interacts with UNC119; this interaction plays a crucial role in activation of LCK. Interacts with CEACAM1 (via cytoplasmic domain); mediates CEACAM1 phosphorylation resulting in PTPN6 recruitment that dephosphorylates TCR stimulation-induced CD247 and ZAP70. Interacts with CD160. Interacts with CD48. As to quaternary structure, (Microbial infection) Interacts with herpes simplex virus 1 UL46; this interaction activates LCK. In terms of assembly, (Microbial infection) Interacts with HIV-1 Nef through its SH3 domain. In terms of processing, autophosphorylated on Tyr-394, increasing enzymatic activity, this site is dephosphorylated by PTN22. Phosphorylated on Tyr-505 by CSK, decreasing activity. Dephosphorylated by PTPRC/CD45. Dephosphorylation at Tyr-394 by PTPN2 negatively regulates T-cell receptor signaling. Dephosphorylation at Tyr-394 by DUSP22 negatively regulates T-cell receptor signaling. Myristoylation is required prior to palmitoylation. Post-translationally, palmitoylation regulates association with the plasma membrane and could be mediated by ZDHHC2. In terms of processing, 'Lys-63'-linked ubiquitinated at Lys-99 and Lys-276 by UBR2; this modification is required for autophosphorylation at Tyr-394. As to expression, expressed specifically in lymphoid cells.

Its subcellular location is the cell membrane. The protein localises to the cytoplasm. It localises to the cytosol. The enzyme catalyses L-tyrosyl-[protein] + ATP = O-phospho-L-tyrosyl-[protein] + ADP + H(+). With respect to regulation, the relative activities of the inhibitory tyrosine-protein kinase CSK and the activating tyrosine-protein phosphatase PTPRC/CD45 determine the level of LCK activity. These interactions allow rapid and efficient activation of LCK in response to TCR stimulation. In terms of biological role, non-receptor tyrosine-protein kinase that plays an essential role in the selection and maturation of developing T-cells in the thymus and in the function of mature T-cells. Plays a key role in T-cell antigen receptor (TCR)-linked signal transduction pathways. Constitutively associated with the cytoplasmic portions of the CD4 and CD8 surface receptors. Association of the TCR with a peptide antigen-bound MHC complex facilitates the interaction of CD4 and CD8 with MHC class II and class I molecules, respectively, thereby recruiting the associated LCK protein to the vicinity of the TCR/CD3 complex. LCK then phosphorylates tyrosine residues within the immunoreceptor tyrosine-based activation motifs (ITAM) of the cytoplasmic tails of the TCR-gamma chains and CD3 subunits, initiating the TCR/CD3 signaling pathway. Once stimulated, the TCR recruits the tyrosine kinase ZAP70, that becomes phosphorylated and activated by LCK. Following this, a large number of signaling molecules are recruited, ultimately leading to lymphokine production. LCK also contributes to signaling by other receptor molecules. Associates directly with the cytoplasmic tail of CD2, which leads to hyperphosphorylation and activation of LCK. Also plays a role in the IL2 receptor-linked signaling pathway that controls the T-cell proliferative response. Binding of IL2 to its receptor results in increased activity of LCK. Is expressed at all stages of thymocyte development and is required for the regulation of maturation events that are governed by both pre-TCR and mature alpha beta TCR. Phosphorylates other substrates including RUNX3, PTK2B/PYK2, the microtubule-associated protein MAPT, RHOH or TYROBP. Interacts with FYB2. The polypeptide is Tyrosine-protein kinase Lck (LCK) (Homo sapiens (Human)).